The sequence spans 304 residues: uncharacterized protein (304 aa).

The N-terminal stretch at 1–22 (MKKSLTLLILLLCSLLFSTVLS) is a signal peptide. The segment at 91–111 (PAPAPTPESSDPDEPMKPDDS) is disordered. 4 N-linked (GlcNAc...) asparagine glycosylation sites follow: Asn-133, Asn-160, Asn-183, and Asn-233. Residue Ser-282 is the site of GPI-anchor amidated serine attachment. A propeptide spans 283–304 (SSHLFGVLPFLPLVLCIFLFLL) (removed in mature form).

It localises to the cell membrane. This is an uncharacterized protein from Arabidopsis thaliana (Mouse-ear cress).